A 135-amino-acid polypeptide reads, in one-letter code: Large ribosomal subunit protein uL16c (135 aa).

This sequence belongs to the universal ribosomal protein uL16 family. Part of the 50S ribosomal subunit.

It localises to the plastid. The protein resides in the chloroplast. The protein is Large ribosomal subunit protein uL16c of Ranunculus macranthus (Large buttercup).